A 290-amino-acid chain; its full sequence is Cilia- and flagella-associated protein 298 (290 aa).

The residue at position 264 (Y264) is a Phosphotyrosine.

It belongs to the CFAP298 family. In terms of assembly, interacts with ZMYND10.

Its subcellular location is the cytoplasm. The protein localises to the cytoskeleton. It localises to the cilium basal body. Plays a role in motile cilium function, possibly by acting on outer dynein arm assembly. Seems to be important for initiation rather than maintenance of cilium motility. Required for correct positioning of the cilium at the apical cell surface, suggesting an additional role in the planar cell polarity (PCP) pathway. May suppress canonical Wnt signaling activity. This chain is Cilia- and flagella-associated protein 298, found in Homo sapiens (Human).